The following is a 385-amino-acid chain: Putative F-box protein At1g49610 (385 aa).

The F-box domain maps to 25-73 (VDSISSLPDVILQENLSLIPTKFAIRTSVLSKRWRHVWSETPSLDFDDC).

This Arabidopsis thaliana (Mouse-ear cress) protein is Putative F-box protein At1g49610.